The sequence spans 326 residues: Nucleoporin Nup37 (326 aa).

7 WD repeats span residues 6–54, 61–109, 115–154, 159–195, 199–237, 242–282, and 287–324; these read SRNA…FQEE, IQYK…LFTS, NEYK…IWNL, TAHF…FYDL, QAIL…IWDI, YPQN…QFQI, and HPQP…FWVT.

Component of the Nup107-160 subcomplex of the nuclear pore complex (NPC). The Nup107-160 subcomplex includes NUP160, NUP133, NUP107, NUP98, NUP85, NUP43, NUP37, SEH1 and SEC13.

The protein resides in the chromosome. It is found in the centromere. It localises to the kinetochore. Its subcellular location is the nucleus. The protein localises to the nuclear pore complex. Functionally, component of the Nup107-160 subcomplex of the nuclear pore complex (NPC). The Nup107-160 subcomplex is required for the assembly of a functional NPC. The Nup107-160 subcomplex is also required for normal kinetochore microtubule attachment, mitotic progression and chromosome segregation. The chain is Nucleoporin Nup37 (NUP37) from Homo sapiens (Human).